A 483-amino-acid chain; its full sequence is Altronate oxidoreductase (483 aa).

I18 to A29 is an NAD(+) binding site.

Belongs to the mannitol dehydrogenase family. UxaB subfamily.

It catalyses the reaction D-altronate + NAD(+) = keto-D-tagaturonate + NADH + H(+). It functions in the pathway carbohydrate metabolism; pentose and glucuronate interconversion. In Escherichia coli O7:K1 (strain IAI39 / ExPEC), this protein is Altronate oxidoreductase.